A 255-amino-acid chain; its full sequence is Hydroxyacylglutathione hydrolase (255 aa).

Residues His56, His58, Asp60, His61, His114, Asp133, and His171 each coordinate Zn(2+).

The protein belongs to the metallo-beta-lactamase superfamily. Glyoxalase II family. In terms of assembly, monomer. It depends on Zn(2+) as a cofactor.

The enzyme catalyses an S-(2-hydroxyacyl)glutathione + H2O = a 2-hydroxy carboxylate + glutathione + H(+). Its pathway is secondary metabolite metabolism; methylglyoxal degradation; (R)-lactate from methylglyoxal: step 2/2. Thiolesterase that catalyzes the hydrolysis of S-D-lactoyl-glutathione to form glutathione and D-lactic acid. In Bradyrhizobium sp. (strain BTAi1 / ATCC BAA-1182), this protein is Hydroxyacylglutathione hydrolase.